Reading from the N-terminus, the 49-residue chain is Large ribosomal subunit protein bL33 (49 aa).

This sequence belongs to the bacterial ribosomal protein bL33 family.

In Clostridium perfringens (strain ATCC 13124 / DSM 756 / JCM 1290 / NCIMB 6125 / NCTC 8237 / Type A), this protein is Large ribosomal subunit protein bL33.